We begin with the raw amino-acid sequence, 69 residues long: MDILEETAAPLKDFAKNSIRLFKKCTKPDAQEFQKIALATLIGFAIMGFIGFFVKLIHIPINNILVGGV.

The Cytoplasmic portion of the chain corresponds to 1–40 (MDILEETAAPLKDFAKNSIRLFKKCTKPDAQEFQKIALAT). The helical transmembrane segment at 41 to 61 (LIGFAIMGFIGFFVKLIHIPI) threads the bilayer. The Extracellular segment spans residues 62-69 (NNILVGGV).

It belongs to the SecE/SEC61-gamma family. In terms of assembly, heterotrimeric complex composed of SEC61-alpha, SEC61-beta and SEC61-gamma.

The protein resides in the endoplasmic reticulum membrane. Functionally, necessary for protein translocation in the endoplasmic reticulum. The chain is Protein transport protein Sec61 subunit gamma (sec61g) from Dictyostelium discoideum (Social amoeba).